A 270-amino-acid polypeptide reads, in one-letter code: MSCFLEAEAATYSVGGATLVDRISLRIEGGELIAIVGPNGAGKSTLLRMLSGDLRPSRGAVRLQQRAVHSYAPRELASRRAMLSQHVSVSFPFTVDEIVQMGAGDRSRAATQSLVDAALHEVGLAEFRDRKLPTLSGGEQQRAHFARVLVQLGCGEAEHGPGLLLLDEPTSSLDLRHQLDLVSTAARCARNGTTVIAILHDLNLAARFADRIVVLHQGALAADGPPDQVIQNSLINRVFDIELAVRMADDGAPFILPQMVKSDDSANRMA.

The ABC transporter domain occupies 5-242 (LEAEAATYSV…SLINRVFDIE (238 aa)). 37–44 (GPNGAGKS) is a binding site for ATP.

The protein belongs to the ABC transporter superfamily. Heme (hemin) importer (TC 3.A.1.14.5) family. In terms of assembly, the complex is composed of two ATP-binding proteins (HmuV), two transmembrane proteins (HmuU) and a solute-binding protein (HmuT).

Its subcellular location is the cell inner membrane. In terms of biological role, part of the ABC transporter complex HmuTUV involved in hemin import. Responsible for energy coupling to the transport system. In Rhodopseudomonas palustris (strain BisA53), this protein is Hemin import ATP-binding protein HmuV.